The primary structure comprises 837 residues: Tuftelin-interacting protein 11 (837 aa).

2 stretches are compositionally biased toward basic and acidic residues: residues 1–13 (MSLS…GEGR) and 53–64 (VWAERDSDDERP). Disordered stretches follow at residues 1–21 (MSLS…DDER), 53–72 (VWAE…KRAR), and 85–133 (LKKG…KGFA). Residues 1-50 (MSLSHLYRDGEGRIDDDDDERENFEITDWDLQNEFNPNRQRHWQTKEEAT) form a required for interaction with DHX15 region. Serine 2, serine 59, and serine 98 each carry phosphoserine. The segment covering 91 to 102 (EEAELEDSDDEE) has biased composition (acidic residues). Residues 103–116 (KPVKQDDFPKDFGP) show a composition bias toward basic and acidic residues. Serine 144 carries the phosphoserine modification. Positions 149–195 (TKGIGQKLLQKMGYVPGRGLGKNAQGIINPIEAKQRKGKGAVGAYGS) constitute a G-patch domain. The interval 179–236 (IEAKQRKGKGAVGAYGSERTTQSMQDFPVVDSEEEAEEEFQKELSQWRKDPSGSKKKP) is disordered. Residue serine 210 is modified to Phosphoserine. Residues 217–231 (EFQKELSQWRKDPSG) are compositionally biased toward basic and acidic residues. A Nuclear localization signal motif is present at residues 700 to 705 (VKDKFN). Residues 710–734 (IMNRAVSSNVGAYMQPGARENIAYL) are required for nuclear speckle localization.

Belongs to the TFP11/STIP family. Identified in the spliceosome C complex. Found in the Intron Large (IL) complex, a post-mRNA release spliceosomal complex containing the excised intron, U2, U5 and U6 snRNPs, and splicing factors. Interacts with TUFT1. Interacts with DHX15; indicative for a recruitment of DHX15 to the IL complex. Interacts with GCFC2.

The protein localises to the cytoplasm. The protein resides in the nucleus. In terms of biological role, involved in pre-mRNA splicing, specifically in spliceosome disassembly during late-stage splicing events. Intron turnover seems to proceed through reactions in two lariat-intron associated complexes termed Intron Large (IL) and Intron Small (IS). In cooperation with DHX15 seems to mediate the transition of the U2, U5 and U6 snRNP-containing IL complex to the snRNP-free IS complex leading to efficient debranching and turnover of excised introns. May play a role in the differentiation of ameloblasts and odontoblasts or in the forming of the enamel extracellular matrix. This chain is Tuftelin-interacting protein 11 (TFIP11), found in Homo sapiens (Human).